The following is a 347-amino-acid chain: NADH-ubiquinone oxidoreductase chain 2 (347 aa).

Helical transmembrane passes span 1–21, 25–45, 60–80, 96–116, 127–147, 149–169, 178–198, 202–222, 239–259, 274–294, and 326–346; these read MNPM…SIVM, HWFL…PVLM, FLTQ…NLMF, MLLT…FWVP, GLIL…QIYP, INTN…GWGG, IMAY…IYNP, LLNL…LIFA, IITI…PLTG, NSVI…FFYM, and MMPL…FILL.

Belongs to the complex I subunit 2 family. Core subunit of respiratory chain NADH dehydrogenase (Complex I) which is composed of 45 different subunits. Interacts with TMEM242.

It localises to the mitochondrion inner membrane. It catalyses the reaction a ubiquinone + NADH + 5 H(+)(in) = a ubiquinol + NAD(+) + 4 H(+)(out). Functionally, core subunit of the mitochondrial membrane respiratory chain NADH dehydrogenase (Complex I) that is believed to belong to the minimal assembly required for catalysis. Complex I functions in the transfer of electrons from NADH to the respiratory chain. The immediate electron acceptor for the enzyme is believed to be ubiquinone. The protein is NADH-ubiquinone oxidoreductase chain 2 of Suncus etruscus (Etruscan shrew).